We begin with the raw amino-acid sequence, 154 residues long: Insulin-like peptide 1 (154 aa).

The signal sequence occupies residues 1–29; that stretch reads MFSQHNGAAVHGLRLQSLLIAAMLTAAMA. Intrachain disulfides connect Cys-49–Cys-138, Cys-61–Cys-151, and Cys-137–Cys-142. The tract at residues 72-92 is disordered; sequence RESLLGNSDDDEDTEQEVQDD. The propeptide at 73-122 is connecting peptide; sequence ESLLGNSDDDEDTEQEVQDDSSMWQTLDGAGYSFSPLLTNLYGSEVLIKM. Residues 79–91 are compositionally biased toward acidic residues; that stretch reads SDDDEDTEQEVQD.

It belongs to the insulin family. As to quaternary structure, heterodimer of a B chain and an A chain linked by two disulfide bonds.

It localises to the secreted. In terms of biological role, possible ligand of InR/insulin-like receptor. In Drosophila melanogaster (Fruit fly), this protein is Insulin-like peptide 1.